A 323-amino-acid polypeptide reads, in one-letter code: Down-regulator of invasive growth 2 (323 aa).

Residues 1–10 (MNKEEQEDPQ) show a composition bias toward acidic residues. The segment at 1-26 (MNKEEQEDPQQEQISTVQENDPRNLQ) is disordered. The segment covering 11-26 (QEQISTVQENDPRNLQ) has biased composition (polar residues). Ser34 is modified (phosphoserine). The tract at residues 67–87 (LSQKEEDHSGKPPTITTSPAE) is disordered. 3 positions are modified to phosphoserine: Ser225, Ser266, and Ser270.

As to quaternary structure, forms a complex with DIG1, STE12 and either FUS3 or KSS1. The interaction of FUS3 with STE12 depends on the presence of both DIG1 and DIG2. STE12 is lost from FUS3/DIG1/DIG2 complex after pheromone treatment. DIG1 and DIG2 have also been reported to interact with CLN1 and CLN2. In terms of processing, phosphorylated by FUS3 and KSS1, in a pheromone-stimulated manner.

Its subcellular location is the nucleus. Its function is as follows. DIG2 and DIG1 are negative regulators of the filamentation and pheromone induced mating program. DIG1 and DIG2 inhibit the transcriptional activity of STE12 by direct protein-protein interaction. DIG2 binds to the DNA binding domain (DBD) of STE12 and thus inhibits transcription when overexpressed. The protein is Down-regulator of invasive growth 2 (DIG2) of Saccharomyces cerevisiae (strain ATCC 204508 / S288c) (Baker's yeast).